Here is a 294-residue protein sequence, read N- to C-terminus: Zinc finger protein 346 (294 aa).

M1 is subject to N-acetylmethionine. A compositionally biased stretch (low complexity) spans 1–19 (MECPAPDATDAADPGEAGP). Residues 1–35 (MECPAPDATDAADPGEAGPYKGSEEPEGREPDGVR) are disordered. Residues 22–35 (GSEEPEGREPDGVR) show a composition bias toward basic and acidic residues. The Matrin-type 1 zinc-finger motif lies at 70–104 (FTSTQCKVCCAMLISESQKLAHYQSKKHANKVKRY). Residues C75, C78, H91, and H97 each contribute to the Zn(2+) site. K114 participates in a covalent cross-link: Glycyl lysine isopeptide (Lys-Gly) (interchain with G-Cter in SUMO2). The Matrin-type 2 zinc finger occupies 131–165 (DKNHCCPICNMTFSSPAVAQSHYLGKTHAKSLKLK). Zn(2+)-binding residues include C136, C139, H152, and H158. Residue K170 forms a Glycyl lysine isopeptide (Lys-Gly) (interchain with G-Cter in SUMO2) linkage. Matrin-type zinc fingers lie at residues 182-216 (DPDKFCSLCHSTFNDPAMAQQHYMGKRHRKQETKL) and 236-270 (GKGYPCKTCKIVLNSIEQYQAHVSGFKHKNQSPKT). Residues 269–294 (KTLVTLGSQTPVQTQPTPKDSSTVQD) form a disordered region.

In terms of assembly, forms a heteromeric complex with XPO5 and ILF3. Found in a nuclear export complex with XPO5, RAN, ILF3, ZNF346 and double-stranded RNA. Interacts with XPO5. Interacts with ILF3 in an RNA-independent manner. In terms of tissue distribution, expressed in all tissues tested, including heart, brain, spleen, lung, liver, muscle, kidney and testis. Exogenous expression induced apoptosis.

It is found in the nucleus. The protein localises to the nucleolus. It localises to the cytoplasm. Its function is as follows. Binds with low affinity to dsDNA and ssRNA, and with high affinity to dsRNA, with no detectable sequence specificity. May bind to specific miRNA hairpins. The chain is Zinc finger protein 346 (Znf346) from Mus musculus (Mouse).